Consider the following 431-residue polypeptide: Enolase (431 aa).

(2R)-2-phosphoglycerate is bound at residue Gln163. Residue Glu205 is the Proton donor of the active site. Positions 242, 288, and 315 each coordinate Mg(2+). Positions 340, 369, 370, and 391 each coordinate (2R)-2-phosphoglycerate. The active-site Proton acceptor is Lys340.

This sequence belongs to the enolase family. The cofactor is Mg(2+).

The protein localises to the cytoplasm. Its subcellular location is the secreted. It is found in the cell surface. The enzyme catalyses (2R)-2-phosphoglycerate = phosphoenolpyruvate + H2O. Its pathway is carbohydrate degradation; glycolysis; pyruvate from D-glyceraldehyde 3-phosphate: step 4/5. Catalyzes the reversible conversion of 2-phosphoglycerate (2-PG) into phosphoenolpyruvate (PEP). It is essential for the degradation of carbohydrates via glycolysis. In Acholeplasma laidlawii (strain PG-8A), this protein is Enolase.